A 168-amino-acid polypeptide reads, in one-letter code: Small ribosomal subunit protein uS5 (168 aa).

Positions 17 to 80 (IEDQLVAVNR…EDGKKKMINV (64 aa)) constitute an S5 DRBM domain.

The protein belongs to the universal ribosomal protein uS5 family. In terms of assembly, part of the 30S ribosomal subunit. Contacts proteins S4 and S8.

In terms of biological role, with S4 and S12 plays an important role in translational accuracy. Located at the back of the 30S subunit body where it stabilizes the conformation of the head with respect to the body. This Lactobacillus helveticus (strain DPC 4571) protein is Small ribosomal subunit protein uS5.